A 422-amino-acid polypeptide reads, in one-letter code: La-related protein 6A (422 aa).

Residues 1 to 94 are disordered; it reads MSSLPLRSGE…DHGENPVETD (94 aa). Over residues 48-61 the composition is skewed to low complexity; that stretch reads VTESSDDVVVNVSE. Basic and acidic residues predominate over residues 73-89; it reads DHERNSGEDRDQDHGEN. Residues 97-188 form the HTH La-type RNA-binding domain; the sequence is VVPIDELNQK…KRLSPLPEIR (92 aa). The 91-residue stretch at 193 to 283 folds into the RRM domain; the sequence is FTVLVENLPE…NGLRVKLLEQ (91 aa). The interval 286 to 422 is disordered; that stretch reads GKFAQRRPAR…PTSTQTSHEV (137 aa). Residues 295 to 348 show a composition bias toward basic and acidic residues; it reads RREVDKEKDTTGRVHDQTGGEKNKKTREHQNHRLHHSDNPADDDGGNHQKDKNG.

The protein resides in the nucleus. Functionally, transcriptional regulator. This chain is La-related protein 6A (LARP6A), found in Arabidopsis thaliana (Mouse-ear cress).